A 39-amino-acid chain; its full sequence is U1-nemetoxin-Csp1c (39 aa).

Intrachain disulfides connect Cys1–Cys15, Cys8–Cys19, Cys14–Cys36, and Cys25–Cys32.

As to expression, expressed by the venom gland.

The protein resides in the secreted. Functionally, causes paralysis to insect larvae (H.virescens). This toxin is active only on insects. This is U1-nemetoxin-Csp1c from Calisoga sp. (Spider).